We begin with the raw amino-acid sequence, 373 residues long: T-protein (373 aa).

One can recognise a Chorismate mutase domain in the interval M1–G90. The region spanning R99–S361 is the Prephenate/arogenate dehydrogenase domain.

In the C-terminal section; belongs to the prephenate/arogenate dehydrogenase family.

It is found in the cytoplasm. The catalysed reaction is chorismate = prephenate. The enzyme catalyses prephenate + NAD(+) = 3-(4-hydroxyphenyl)pyruvate + CO2 + NADH. The protein operates within amino-acid biosynthesis; L-tyrosine biosynthesis; (4-hydroxyphenyl)pyruvate from prephenate (NAD(+) route): step 1/1. It participates in metabolic intermediate biosynthesis; prephenate biosynthesis; prephenate from chorismate: step 1/1. This is T-protein (tyrA) from Escherichia coli (strain K12).